A 149-amino-acid chain; its full sequence is 3-hydroxyacyl-[acyl-carrier-protein] dehydratase FabZ (149 aa).

The active site involves histidine 50.

The protein belongs to the thioester dehydratase family. FabZ subfamily.

Its subcellular location is the cytoplasm. The catalysed reaction is a (3R)-hydroxyacyl-[ACP] = a (2E)-enoyl-[ACP] + H2O. Its function is as follows. Involved in unsaturated fatty acids biosynthesis. Catalyzes the dehydration of short chain beta-hydroxyacyl-ACPs and long chain saturated and unsaturated beta-hydroxyacyl-ACPs. This chain is 3-hydroxyacyl-[acyl-carrier-protein] dehydratase FabZ, found in Pediococcus pentosaceus (strain ATCC 25745 / CCUG 21536 / LMG 10740 / 183-1w).